Reading from the N-terminus, the 301-residue chain is L-threonate dehydrogenase (301 aa).

NAD(+)-binding positions include 6-34 (YSVA…TYGI) and threonine 101. Residue lysine 177 is part of the active site. Position 245 (lysine 245) interacts with NAD(+).

It belongs to the HIBADH-related family. L-threonate dehydrogenase subfamily.

The enzyme catalyses L-threonate + NAD(+) = 2-dehydro-L-erythronate + NADH + H(+). Its function is as follows. Catalyzes oxidation of L-threonate to 2-oxo-tetronate. Can use either NAD(+) or NADP(+) as cosubstrate, with a preference for NAD(+). This is L-threonate dehydrogenase from Haemophilus influenzae (strain ATCC 51907 / DSM 11121 / KW20 / Rd).